The sequence spans 198 residues: Recombination protein RecR (198 aa).

The C4-type zinc finger occupies 57-72; it reads CEKCNTFTEAQICEVC. The Toprim domain maps to 80–175; sequence TLLCVVETPA…AVTRLARGVP (96 aa).

This sequence belongs to the RecR family.

Its function is as follows. May play a role in DNA repair. It seems to be involved in an RecBC-independent recombinational process of DNA repair. It may act with RecF and RecO. This Paraburkholderia phytofirmans (strain DSM 17436 / LMG 22146 / PsJN) (Burkholderia phytofirmans) protein is Recombination protein RecR.